The following is a 1286-amino-acid chain: Autotransporter adhesin AIDA-I (1286 aa).

Residues 1-49 (MNKAYSIIWSHSRQAWIVASELARGHGFVLAKNTLLVLAVVSTIGNAFA) form the signal peptide. 3 O-alpha-linked (glycero-D-manno-heptose) serine glycosylation sites follow: Ser102, Ser111, and Ser116. Thr154 carries O-alpha-linked (glycero-D-manno-heptose) threonine glycosylation. Residues Ser242, Ser252, Ser334, Ser391, Ser409, Ser539, Ser545, Ser558, Ser569, Ser576, Ser577, and Ser582 are each glycosylated (O-alpha-linked (glycero-D-manno-heptose) serine). The region spanning 998–1286 (TQPESASVWM…SGALGIKYSF (289 aa)) is the Autotransporter domain. The beta stranded transmembrane segment at 1006-1012 (WMKITGG) threads the bilayer. The Extracellular segment spans residues 1013–1029 (ISSGKLNDGQNKTTTNQ). A beta stranded transmembrane segment spans residues 1030 to 1040 (FINQLGGDIYK). At 1041-1047 (FHAEQLG) the chain is on the periplasmic side. A beta stranded transmembrane segment spans residues 1048–1058 (DFTLGIMGGYA). Residues 1059-1079 (NAKGKTINYTSNKAARNTLDG) lie on the Extracellular side of the membrane. The beta stranded transmembrane segment at 1080–1087 (YSVGVYGT) threads the bilayer. At 1088-1097 (WYQNGENATG) the chain is on the periplasmic side. A beta stranded transmembrane segment spans residues 1098 to 1108 (LFAETWMQYNW). The Extracellular portion of the chain corresponds to 1109 to 1126 (FNASVKGDGLEEEKYNLN). The chain crosses the membrane as a beta stranded span at residues 1127–1138 (GLTASAGGGYNL). Residues 1139–1152 (NVHTWTSPEGITGE) are Periplasmic-facing. The beta stranded transmembrane segment at 1153 to 1164 (FWLQPHLQAVWM) threads the bilayer. Residues 1165–1186 (GVTPDTHQEDNGTVVQGAGKNN) lie on the Extracellular side of the membrane. Residues 1187-1198 (IQTKAGIRASWK) form a beta stranded membrane-spanning segment. At 1199–1210 (VKSTLDKDTGRR) the chain is on the periplasmic side. The chain crosses the membrane as a beta stranded span at residues 1211–1221 (FRPYIEANWIH). Topologically, residues 1222–1242 (NTHEFGVKMSDDSQLLSGSRN) are extracellular. Residues 1243–1253 (QGEIKTGIEGV) form a beta stranded membrane-spanning segment. Over 1254–1259 (ITQNLS) the chain is Periplasmic. Residues 1260–1267 (VNGGVAYQ) form a beta stranded membrane-spanning segment. The Extracellular portion of the chain corresponds to 1268 to 1275 (AGGHGSNA). Residues 1276–1284 (ISGALGIKY) traverse the membrane as a beta stranded segment. The Periplasmic segment spans residues 1285-1286 (SF).

Intercellular AIDA-AIDA interaction is responsible for bacterial autoaggregation. AIDA can also interact with antigen 43 (Ag43), and the resultant intercellular AIDA-Ag43 interaction causes cell aggregation. Post-translationally, glycosylated on serine residues by AHH and AAH2 in the cytoplasm. Glycosylated with an average of 19 heptose residues. Glycosylated with either ADP-L, D-heptose or ADP-D, D-heptose. Glycosylation is required for protein folding/stabilization and resistance to protease-mediated degradation. Glycosylation is required for bacteria adhesion to mammalian cells. Glycosylation is dispensable for cell outer membrane localization. Glycosylation is dispensable for AIDA-mediated cell-cell aggregation and induction of biofilm formation. Glycosylation is dispensable for interaction with Ag43.

The protein localises to the periplasm. It is found in the secreted. It localises to the cell surface. Its subcellular location is the cell outer membrane. In terms of biological role, potent bacterial adhesin that mediates bacterial attachment to a broad variety of human and other mammalian cells. Has additional virulence properties, as it is capable of mediating bacterial autoaggregation via intercellular self-recognition and it is a highly efficient initiator of biofilm formation. This chain is Autotransporter adhesin AIDA-I (aidA), found in Escherichia coli.